The following is an 886-amino-acid chain: Microsomal triacylglycerol transfer protein (886 aa).

Positions 1 to 27 (MENKNKKCLRTLLLLALFLGLLEDGKT) are cleaved as a signal peptide. The Vitellogenin domain maps to 30-653 (IAPNSQQIFK…SQASSFKLGI (624 aa)). 4 N-linked (GlcNAc...) asparagine glycosylation sites follow: asparagine 358, asparagine 484, asparagine 502, and asparagine 616.

Its subcellular location is the endoplasmic reticulum. The protein localises to the golgi apparatus. It carries out the reaction a 1,2-diacyl-sn-glycero-3-phosphocholine(in) = a 1,2-diacyl-sn-glycero-3-phosphocholine(out). The enzyme catalyses a 1,2-diacyl-sn-glycero-3-phosphoethanolamine(in) = a 1,2-diacyl-sn-glycero-3-phosphoethanolamine(out). Catalyzes the transport of phospholipids such as phosphatidylethanolamine (1,2-diacyl-sn-glycero-3-phosphoethanolamine) and phosphatidylcholine (1,2-diacyl-sn-glycero-3-phosphocholine) between membranes. Required for the assembly and secretion of plasma lipoproteins that contain apolipoprotein B. In Drosophila melanogaster (Fruit fly), this protein is Microsomal triacylglycerol transfer protein.